Consider the following 51-residue polypeptide: MARFAGVDIPNEKRIVISLTYVFGVGLQTSKKVLAAAGVSEDIRTKDLTSD.

This sequence belongs to the universal ribosomal protein uS13 family. In terms of assembly, part of the 30S ribosomal subunit. Forms a loose heterodimer with protein S19. Forms two bridges to the 50S subunit in the 70S ribosome.

Its function is as follows. Located at the top of the head of the 30S subunit, it contacts several helices of the 16S rRNA. In the 70S ribosome it contacts the 23S rRNA (bridge B1a) and protein L5 of the 50S subunit (bridge B1b), connecting the 2 subunits; these bridges are implicated in subunit movement. Contacts the tRNAs in the A and P-sites. This is Small ribosomal subunit protein uS13 (rpsM) from Lactococcus lactis subsp. cremoris (Streptococcus cremoris).